Reading from the N-terminus, the 428-residue chain is Adenylosuccinate synthetase (428 aa).

GTP-binding positions include 12–18 (GDEGKGK) and 40–42 (GHT). The active-site Proton acceptor is aspartate 13. Mg(2+)-binding residues include aspartate 13 and glycine 40. Residues 13 to 16 (DEGK), 38 to 41 (NAGH), threonine 129, arginine 143, glutamine 224, threonine 239, and arginine 303 contribute to the IMP site. The active-site Proton donor is the histidine 41. Substrate is bound at residue 299–305 (VTTGRIR). GTP contacts are provided by residues arginine 305, 331–333 (KVD), and 410–412 (AYG).

This sequence belongs to the adenylosuccinate synthetase family. As to quaternary structure, homodimer. Requires Mg(2+) as cofactor.

It is found in the cytoplasm. The catalysed reaction is IMP + L-aspartate + GTP = N(6)-(1,2-dicarboxyethyl)-AMP + GDP + phosphate + 2 H(+). Its pathway is purine metabolism; AMP biosynthesis via de novo pathway; AMP from IMP: step 1/2. Its function is as follows. Plays an important role in the de novo pathway of purine nucleotide biosynthesis. Catalyzes the first committed step in the biosynthesis of AMP from IMP. The protein is Adenylosuccinate synthetase of Francisella tularensis subsp. tularensis (strain FSC 198).